We begin with the raw amino-acid sequence, 70 residues long: U-scoloptoxin(20)-Sm1a (70 aa).

The first 24 residues, 1–24, serve as a signal peptide directing secretion; the sequence is MKKRSQVFCIFIAMVLLILPLSMS.

This sequence belongs to the scoloptoxin-20 family. Contains 3 disulfide bonds. As to expression, expressed by the venom gland.

It localises to the secreted. This chain is U-scoloptoxin(20)-Sm1a, found in Scolopendra morsitans (Tanzanian blue ringleg centipede).